The following is a 227-amino-acid chain: Cytochrome c oxidase subunit 2 (227 aa).

Over 1 to 14 (MAYPMQLGLQDATS) the chain is Mitochondrial intermembrane. Residues 15-45 (PIMEELMNFHDHTLMIVFLISSLVLYLISLM) form a helical membrane-spanning segment. Over 46–59 (LTTKLIHTNTMDAQ) the chain is Mitochondrial matrix. The chain crosses the membrane as a helical span at residues 60-87 (EVETIWTILPAIILVLIALPSLRILYMM). At 88–227 (DEINNPVLTV…FFENWSSSMT (140 aa)) the chain is on the mitochondrial intermembrane side. Cu cation contacts are provided by H161, C196, E198, C200, H204, and M207. Residue E198 coordinates Mg(2+).

The protein belongs to the cytochrome c oxidase subunit 2 family. In terms of assembly, component of the cytochrome c oxidase (complex IV, CIV), a multisubunit enzyme composed of 14 subunits. The complex is composed of a catalytic core of 3 subunits MT-CO1, MT-CO2 and MT-CO3, encoded in the mitochondrial DNA, and 11 supernumerary subunits COX4I, COX5A, COX5B, COX6A, COX6B, COX6C, COX7A, COX7B, COX7C, COX8 and NDUFA4, which are encoded in the nuclear genome. The complex exists as a monomer or a dimer and forms supercomplexes (SCs) in the inner mitochondrial membrane with NADH-ubiquinone oxidoreductase (complex I, CI) and ubiquinol-cytochrome c oxidoreductase (cytochrome b-c1 complex, complex III, CIII), resulting in different assemblies (supercomplex SCI(1)III(2)IV(1) and megacomplex MCI(2)III(2)IV(2)). Found in a complex with TMEM177, COA6, COX18, COX20, SCO1 and SCO2. Interacts with TMEM177 in a COX20-dependent manner. Interacts with COX20. Interacts with COX16. Requires Cu cation as cofactor.

The protein resides in the mitochondrion inner membrane. The enzyme catalyses 4 Fe(II)-[cytochrome c] + O2 + 8 H(+)(in) = 4 Fe(III)-[cytochrome c] + 2 H2O + 4 H(+)(out). Functionally, component of the cytochrome c oxidase, the last enzyme in the mitochondrial electron transport chain which drives oxidative phosphorylation. The respiratory chain contains 3 multisubunit complexes succinate dehydrogenase (complex II, CII), ubiquinol-cytochrome c oxidoreductase (cytochrome b-c1 complex, complex III, CIII) and cytochrome c oxidase (complex IV, CIV), that cooperate to transfer electrons derived from NADH and succinate to molecular oxygen, creating an electrochemical gradient over the inner membrane that drives transmembrane transport and the ATP synthase. Cytochrome c oxidase is the component of the respiratory chain that catalyzes the reduction of oxygen to water. Electrons originating from reduced cytochrome c in the intermembrane space (IMS) are transferred via the dinuclear copper A center (CU(A)) of subunit 2 and heme A of subunit 1 to the active site in subunit 1, a binuclear center (BNC) formed by heme A3 and copper B (CU(B)). The BNC reduces molecular oxygen to 2 water molecules using 4 electrons from cytochrome c in the IMS and 4 protons from the mitochondrial matrix. This is Cytochrome c oxidase subunit 2 (MT-CO2) from Desmodillus auricularis (Cape short-eared gerbil).